Consider the following 152-residue polypeptide: Small ribosomal subunit protein uS15 (152 aa).

A compositionally biased stretch (basic residues) spans 1 to 11; the sequence is MAKMHTKRKGK. Residues 1-22 are disordered; the sequence is MAKMHTKRKGKSSSTRPIRTEP.

It belongs to the universal ribosomal protein uS15 family. Part of the 30S ribosomal subunit.

The chain is Small ribosomal subunit protein uS15 from Methanosarcina barkeri (strain Fusaro / DSM 804).